A 392-amino-acid polypeptide reads, in one-letter code: Lysine acetyltransferase (392 aa).

The enzyme catalyses L-lysine + acetyl-CoA = N(6)-acetyl-L-lysine + CoA + H(+). The protein operates within amino-acid degradation; L-lysine degradation via acetylation pathway; glutarate from L-lysine: step 1/6. Activity is inhibited by 5-aminovalerate. Lysine N-6-acetyl transferase (LAT) that catalyzes the first step of the lysine degradation pathway. In Yarrowia lipolytica (strain CLIB 122 / E 150) (Yeast), this protein is Lysine acetyltransferase.